Reading from the N-terminus, the 1279-residue chain is ATP-dependent helicase/nuclease subunit A (1279 aa).

The UvrD-like helicase ATP-binding domain occupies 4 to 499 (TKWTDEQRQA…VKLFKNFRSR (496 aa)). Residue 25 to 32 (AGAGAGKT) coordinates ATP. Positions 526–853 (EEALKVGASY…RIMSIHKSKG (328 aa)) constitute a UvrD-like helicase C-terminal domain.

It belongs to the helicase family. AddA subfamily. In terms of assembly, heterodimer of AddA and AddB/RexB. Mg(2+) is required as a cofactor.

It catalyses the reaction Couples ATP hydrolysis with the unwinding of duplex DNA by translocating in the 3'-5' direction.. The catalysed reaction is ATP + H2O = ADP + phosphate + H(+). Its function is as follows. The heterodimer acts as both an ATP-dependent DNA helicase and an ATP-dependent, dual-direction single-stranded exonuclease. Recognizes the chi site generating a DNA molecule suitable for the initiation of homologous recombination. The AddA nuclease domain is required for chi fragment generation; this subunit has the helicase and 3' -&gt; 5' nuclease activities. The sequence is that of ATP-dependent helicase/nuclease subunit A from Clostridium botulinum (strain Hall / ATCC 3502 / NCTC 13319 / Type A).